Here is a 76-residue protein sequence, read N- to C-terminus: UPF0270 protein PSPA7_1664 (76 aa).

This sequence belongs to the UPF0270 family.

This Pseudomonas paraeruginosa (strain DSM 24068 / PA7) (Pseudomonas aeruginosa (strain PA7)) protein is UPF0270 protein PSPA7_1664.